The chain runs to 305 residues: Acetaldehyde dehydrogenase (305 aa).

An NAD(+)-binding site is contributed by 13–16 (SGNI). The active-site Acyl-thioester intermediate is Cys-128. Residues 159-167 (SAGPGTRQN) and Asn-278 contribute to the NAD(+) site.

The protein belongs to the acetaldehyde dehydrogenase family.

The catalysed reaction is acetaldehyde + NAD(+) + CoA = acetyl-CoA + NADH + H(+). This is Acetaldehyde dehydrogenase from Roseiflexus castenholzii (strain DSM 13941 / HLO8).